Here is a 747-residue protein sequence, read N- to C-terminus: Protein MTSS 2 (747 aa).

One can recognise an IMD domain in the interval 1–252 (METAEKECGA…EQVIKDLKGS (252 aa)). The stretch at 135–159 (EIKKKSSDTLKLQKKARKELLGKGD) forms a coiled coil. Composition is skewed to low complexity over residues 256–284 (WSYQ…SSSS), 321–332 (SSVSSHDSGFVS), and 349–367 (TSQK…TCQS). Disordered regions lie at residues 256-302 (WSYQ…YSPS), 318-441 (ARLS…EEVS), 457-522 (LEHQ…RNSN), and 543-599 (PTAG…PTVP). T260 is subject to Phosphothreonine. Phosphoserine is present on S264. Residues 368–378 (VSECSSPTSDW) are compositionally biased toward polar residues. Over residues 397–406 (DRVELLRDTE) the composition is skewed to basic and acidic residues. Residue S441 is modified to Phosphoserine. The segment covering 466-479 (SLQYSSGYSTQTTT) has biased composition (low complexity). Positions 480–492 (PSCSEDTIPSQGS) are enriched in polar residues. S579, S601, S612, S624, S634, and S639 each carry phosphoserine. Disordered regions lie at residues 638 to 664 (LSLP…EDEQ) and 691 to 720 (GQFP…DPPA). T643 is subject to Phosphothreonine. Low complexity-rich tracts occupy residues 646–659 (GSPS…PGAG) and 696–707 (PTALSATPTEET). The region spanning 719-736 (PAEDMLVAIRRGVRLRRT) is the WH2 domain.

It belongs to the MTSS family. Interacts (via IMD domain) with RAC1; this interaction may be important to potentiate PDGF-induced RAC1 activation.

The protein localises to the cytoplasm. Its subcellular location is the cell projection. It localises to the ruffle. Its function is as follows. Involved in plasma membrane dynamics. Potentiated PDGF-mediated formation of membrane ruffles and lamellipodia in fibroblasts, acting via RAC1 activation. May function in actin bundling. This is Protein MTSS 2 from Homo sapiens (Human).